The sequence spans 513 residues: ATP synthase subunit alpha (513 aa).

An ATP-binding site is contributed by 169 to 176 (GDRQTGKS).

Belongs to the ATPase alpha/beta chains family. As to quaternary structure, F-type ATPases have 2 components, CF(1) - the catalytic core - and CF(0) - the membrane proton channel. CF(1) has five subunits: alpha(3), beta(3), gamma(1), delta(1), epsilon(1). CF(0) has three main subunits: a(1), b(2) and c(9-12). The alpha and beta chains form an alternating ring which encloses part of the gamma chain. CF(1) is attached to CF(0) by a central stalk formed by the gamma and epsilon chains, while a peripheral stalk is formed by the delta and b chains.

It localises to the cell membrane. The enzyme catalyses ATP + H2O + 4 H(+)(in) = ADP + phosphate + 5 H(+)(out). Produces ATP from ADP in the presence of a proton gradient across the membrane. The alpha chain is a regulatory subunit. In Baumannia cicadellinicola subsp. Homalodisca coagulata, this protein is ATP synthase subunit alpha.